A 692-amino-acid polypeptide reads, in one-letter code: MKVFCGRANPTTGSLEWLEEDEHYDYHQEIARSSYADMLHDKDRNIKYYQGIRAAVSRVKDRGQKALVLDIGTGTGLLSMMAVTAGADFCYAIEVFKPMAEAAVKIVERNGFSDKIKVINKHSTEVTVGPDGDLPCRANILITELFDTELIGEGALPSYEHAHKHLVQEDCEAVPHRATVYAQLVESRRMWSWNKLFPVRVRTSLGEQVIVPPSELERCPGAPSVCDIQLNQVSPADFTVLSDVLPMFSVDFSKQVSSSAACHSRQFVPLASGQAQVVLSWWDIEMDPEGKIKCTMAPFWAQTDPQELQWRDHWMQCVYFLPQEEPVVQGSPRCLVAHHDDYCVWYSLQRTSPDENDSAYQVRPVCDCQAHLLWNRPRFGEINDQDRTDHYAQALRTVLLPGSVCLCVSDGSLLSMLAHHLGAEQVFTVESSVASYRLMKRIFKVNHLEDKISVINKRPELLTAADLEGKKVSLLLGEPFFTTSLLPWHNLYFWYVRTSVDQHLAPGAVVMPQAASLHAVIVEFRDLWRIRSPCGDCEGFDVHIMDDMIKHSLDFRESREAEPHPLWEYPCRSLSKPQEILTFDFQQPIPQQPMQSKGTMELTRPGKSHGAVLWMEYQLTPDSTISTGLINPAEDKGDCCWNPHCKQAVYFLSTTLDLRVPLNGPRSVSYVVEFHPLTGDITMEFRLADTLS.

2 SAM-dependent MTase PRMT-type domains span residues 14–345 and 358–684; these read SLEW…YCVW and SAYQ…ITME. The residue at position 32 (arginine 32) is an Omega-N-methylarginine. Residues glutamate 144 and glutamate 153 contribute to the active site.

It belongs to the class I-like SAM-binding methyltransferase superfamily. Protein arginine N-methyltransferase family. PRMT7 subfamily. In terms of assembly, homodimer and heterodimer. Interacts with PRMT5 and SNRPD3. Interacts with CTCFL.

The protein resides in the cytoplasm. The protein localises to the cytosol. It is found in the nucleus. The catalysed reaction is L-arginyl-[protein] + S-adenosyl-L-methionine = N(omega)-methyl-L-arginyl-[protein] + S-adenosyl-L-homocysteine + H(+). Its function is as follows. Arginine methyltransferase that can both catalyze the formation of omega-N monomethylarginine (MMA) and symmetrical dimethylarginine (sDMA), with a preference for the formation of MMA. Specifically mediates the symmetrical dimethylation of arginine residues in the small nuclear ribonucleoproteins Sm D1 (SNRPD1) and Sm D3 (SNRPD3); such methylation being required for the assembly and biogenesis of snRNP core particles. Specifically mediates the symmetric dimethylation of histone H4 'Arg-3' to form H4R3me2s. Plays a role in gene imprinting by being recruited by CTCFL at the H19 imprinted control region (ICR) and methylating histone H4 to form H4R3me2s, possibly leading to recruit DNA methyltransferases at these sites. May also play a role in embryonic stem cell (ESC) pluripotency. Also able to mediate the arginine methylation of histone H2A and myelin basic protein (MBP) in vitro; the relevance of such results is however unclear in vivo. The sequence is that of Protein arginine N-methyltransferase 7 (Prmt7) from Mus musculus (Mouse).